Reading from the N-terminus, the 414-residue chain is Voltage-gated ClC-type chloride channel ClcB (414 aa).

A run of 11 helical transmembrane segments spans residues 5-25, 54-74, 116-136, 147-167, 169-189, 220-240, 255-275, 292-312, 327-347, 353-373, and 381-401; these read LVIS…FHQA, ALTP…YQRY, SAIG…SVFA, LWVA…PLAG, LFIA…PVVI, VQYF…PLFL, LLPP…SLIF, TPPG…AVLA, LFVG…WPVL, LLMA…APIM, and MTGE…ATTI.

Belongs to the chloride channel (TC 2.A.49) family. ClcB subfamily.

Its subcellular location is the cell inner membrane. In terms of biological role, probably acts as an electrical shunt for an outwardly-directed proton pump that is linked to amino acid decarboxylation, as part of the extreme acid resistance (XAR) response. This chain is Voltage-gated ClC-type chloride channel ClcB, found in Yersinia pestis.